The following is a 626-amino-acid chain: DNA-directed RNA polymerase subunit gamma (626 aa).

Zn(2+)-binding residues include Cys-71, Cys-73, Cys-86, and Cys-89. The Mg(2+) site is built by Asp-467, Asp-469, and Asp-471.

This sequence belongs to the RNA polymerase beta' chain family. RpoC1 subfamily. In terms of assembly, in cyanobacteria the RNAP catalytic core is composed of 2 alpha, 1 beta, 1 beta', 1 gamma and 1 omega subunit. When a sigma factor is associated with the core the holoenzyme is formed, which can initiate transcription. The cofactor is Mg(2+). Zn(2+) is required as a cofactor.

It carries out the reaction RNA(n) + a ribonucleoside 5'-triphosphate = RNA(n+1) + diphosphate. DNA-dependent RNA polymerase catalyzes the transcription of DNA into RNA using the four ribonucleoside triphosphates as substrates. This is DNA-directed RNA polymerase subunit gamma from Synechocystis sp. (strain ATCC 27184 / PCC 6803 / Kazusa).